We begin with the raw amino-acid sequence, 343 residues long: Lactamase-like protein nscB (343 aa).

Positions 118, 120, 122, and 123 each coordinate Zn(2+). The active-site Proton donor/acceptor is D122.

Belongs to the metallo-beta-lactamase superfamily. Zn(2+) serves as cofactor.

The protein operates within secondary metabolite biosynthesis. Functionally, lactamase-like protein; part of the gene cluster that mediates the biosynthesis of neosartoricin B, a prenylated anthracenone that probably exhibits T-cell antiproliferative activity, suggestive of a physiological role as an immunosuppressive agent. The non-reducing polyketide synthase nscA probably synthesizes and cyclizes the decaketide backbone. The hydrolase nscB then mediates the product release through hydrolysis followed by spontaneous decarboxylation. The prenyltransferase nscD catalyzes the addition of the dimethylallyl group to the aromatic C5. The FAD-dependent monooxygenase nscC is then responsible for the stereospecific hydroxylation at C2. Neosartoricin B can be converted into two additional compounds neosartoricins C and D. Neosartoricin C is a spirocyclic compound that is cyclized through the attack of C3 hydroxyl on C14, followed by dehydration. On the other hand, neosartoricin D is a further cyclized compound in which attack of C2 on C14 in neosartoricin C results in the formation of the acetal-containing dioxabicyclo-octanone ring. Both of these compounds are novel and possibly represent related metabolites of the gene cluster. This Arthroderma otae (strain ATCC MYA-4605 / CBS 113480) (Microsporum canis) protein is Lactamase-like protein nscB.